The primary structure comprises 421 residues: Synaptotagmin-12 (421 aa).

The Vesicular portion of the chain corresponds to 1-18; that stretch reads MAVDVTEYHLSVIKSPPG. A helical transmembrane segment spans residues 19–39; that stretch reads WEVGVYAAGALALLGIAAVSL. Over 40 to 421 the chain is Cytoplasmic; it reads WKLWTSGSFP…VSMWHPVRRN (382 aa). Position 97 is a phosphoserine; by PKA (Ser97). A phosphoserine mark is found at Ser99 and Ser214. C2 domains lie at 152–272 and 283–416; these read TLGQ…SGWL and AVGE…SMWH.

It belongs to the synaptotagmin family. Homodimer. Can also form heterodimers. Interacts with SYT1. Phosphorylation of Ser-97 is required for mossy-fiber long-term potentiation. Expressed in the brain, specifically in neurons of the cerebellum, cortex, hippocampus, olfactory bulb, brainstem and spinal cord (at protein level).

The protein localises to the cytoplasmic vesicle. The protein resides in the secretory vesicle. It localises to the synaptic vesicle membrane. Synaptic vesicle phosphoprotein that enhances spontaneous neurotransmitter release but does not effect induced neurotransmitter release. Unlike other synaptotagmins, it does not bind Ca(2+) or phospholipids. Essential for mossy-fiber long-term potentiation in the hippocampus. This Rattus norvegicus (Rat) protein is Synaptotagmin-12.